Here is a 102-residue protein sequence, read N- to C-terminus: Small ribosomal subunit protein uS10 (102 aa).

This sequence belongs to the universal ribosomal protein uS10 family. As to quaternary structure, part of the 30S ribosomal subunit.

Its function is as follows. Involved in the binding of tRNA to the ribosomes. The chain is Small ribosomal subunit protein uS10 from Streptococcus pneumoniae (strain CGSP14).